The following is a 273-amino-acid chain: Shikimate dehydrogenase (NADP(+)) (273 aa).

Shikimate-binding positions include 15–17 and Thr62; that span reads SQS. The active-site Proton acceptor is Lys66. Glu78 serves as a coordination point for NADP(+). Residues Asn87 and Asp102 each contribute to the shikimate site. NADP(+) is bound by residues 127 to 131, 151 to 156, and Met215; these read GAGGA and NRTVTK. Position 217 (Tyr217) interacts with shikimate. An NADP(+)-binding site is contributed by Gly239.

This sequence belongs to the shikimate dehydrogenase family. As to quaternary structure, homodimer.

It catalyses the reaction shikimate + NADP(+) = 3-dehydroshikimate + NADPH + H(+). It functions in the pathway metabolic intermediate biosynthesis; chorismate biosynthesis; chorismate from D-erythrose 4-phosphate and phosphoenolpyruvate: step 4/7. Functionally, involved in the biosynthesis of the chorismate, which leads to the biosynthesis of aromatic amino acids. Catalyzes the reversible NADPH linked reduction of 3-dehydroshikimate (DHSA) to yield shikimate (SA). The chain is Shikimate dehydrogenase (NADP(+)) from Laribacter hongkongensis (strain HLHK9).